The sequence spans 223 residues: Germin-like protein 1-3 (223 aa).

Residues 1 to 22 (MAKLILATFAVVFMALAATSLA) form the signal peptide. A disulfide bond links Cys32 and Cys50. The N-linked (GlcNAc...) asparagine glycan is linked to Asn55. Residues 64-212 (DGLMKAGNTG…AFQVDGGMVE (149 aa)) enclose the Cupin type-1 domain. Residues His112, His114, Glu119, and His158 each coordinate Mn(2+).

Belongs to the germin family. As to quaternary structure, oligomer (believed to be a pentamer but probably hexamer).

The protein resides in the secreted. It localises to the extracellular space. The protein localises to the apoplast. May play a role in plant defense. Probably has no oxalate oxidase activity even if the active site is conserved. The sequence is that of Germin-like protein 1-3 (GER8) from Oryza sativa subsp. japonica (Rice).